The chain runs to 143 residues: Pollen allergen Phl p 11 (143 aa).

3 disulfides stabilise this stretch: Cys14-Cys85, Cys17-Cys127, and Cys38-Cys73. N-linked (GlcNAc...) asparagine glycosylation is present at Asn24.

Belongs to the Ole e I family.

It localises to the secreted. The sequence is that of Pollen allergen Phl p 11 from Phleum pratense (Common timothy).